A 201-amino-acid chain; its full sequence is Small ribosomal subunit protein uS5 (201 aa).

Residues 1–27 (MAGPQRRGSGAGGGERRDRKGRDGGAA) are disordered. Over residues 14 to 23 (GERRDRKGRD) the composition is skewed to basic and acidic residues. The S5 DRBM domain maps to 34–97 (YVERVVAINR…EEAKKHFFKV (64 aa)).

Belongs to the universal ribosomal protein uS5 family. Part of the 30S ribosomal subunit. Contacts proteins S4 and S8.

In terms of biological role, with S4 and S12 plays an important role in translational accuracy. Functionally, located at the back of the 30S subunit body where it stabilizes the conformation of the head with respect to the body. The protein is Small ribosomal subunit protein uS5 of Streptomyces avermitilis (strain ATCC 31267 / DSM 46492 / JCM 5070 / NBRC 14893 / NCIMB 12804 / NRRL 8165 / MA-4680).